A 142-amino-acid chain; its full sequence is Large ribosomal subunit protein uL11 (142 aa).

The protein belongs to the universal ribosomal protein uL11 family. As to quaternary structure, part of the ribosomal stalk of the 50S ribosomal subunit. Interacts with L10 and the large rRNA to form the base of the stalk. L10 forms an elongated spine to which L12 dimers bind in a sequential fashion forming a multimeric L10(L12)X complex. In terms of processing, one or more lysine residues are methylated.

Functionally, forms part of the ribosomal stalk which helps the ribosome interact with GTP-bound translation factors. In Shewanella piezotolerans (strain WP3 / JCM 13877), this protein is Large ribosomal subunit protein uL11.